The following is a 290-amino-acid chain: Energy-coupling factor transporter ATP-binding protein EcfA2 (290 aa).

Residues 6-246 enclose the ABC transporter domain; the sequence is EKVEHVYNAR…ADKLAAIGLS (241 aa). An ATP-binding site is contributed by 40–47; that stretch reads GHTGSGKS.

Belongs to the ABC transporter superfamily. Energy-coupling factor EcfA family. As to quaternary structure, forms a stable energy-coupling factor (ECF) transporter complex composed of 2 membrane-embedded substrate-binding proteins (S component), 2 ATP-binding proteins (A component) and 2 transmembrane proteins (T component).

The protein resides in the cell membrane. ATP-binding (A) component of a common energy-coupling factor (ECF) ABC-transporter complex. Unlike classic ABC transporters this ECF transporter provides the energy necessary to transport a number of different substrates. The sequence is that of Energy-coupling factor transporter ATP-binding protein EcfA2 from Geobacillus kaustophilus (strain HTA426).